The primary structure comprises 62 residues: Photosystem II reaction center protein Z (62 aa).

2 helical membrane passes run 8-28 (ALAA…VAYA) and 41-61 (FVGS…NFFV).

Belongs to the PsbZ family. As to quaternary structure, PSII is composed of 1 copy each of membrane proteins PsbA, PsbB, PsbC, PsbD, PsbE, PsbF, PsbH, PsbI, PsbJ, PsbK, PsbL, PsbM, PsbT, PsbX, PsbY, PsbZ, Psb30/Ycf12, peripheral proteins PsbO, CyanoQ (PsbQ), PsbU, PsbV and a large number of cofactors. It forms dimeric complexes.

Its subcellular location is the cellular thylakoid membrane. Functionally, may control the interaction of photosystem II (PSII) cores with the light-harvesting antenna, regulates electron flow through the 2 photosystem reaction centers. PSII is a light-driven water plastoquinone oxidoreductase, using light energy to abstract electrons from H(2)O, generating a proton gradient subsequently used for ATP formation. The protein is Photosystem II reaction center protein Z of Picosynechococcus sp. (strain ATCC 27264 / PCC 7002 / PR-6) (Agmenellum quadruplicatum).